Here is a 471-residue protein sequence, read N- to C-terminus: tRNA(Ile)-lysidine synthase (471 aa).

ATP is bound at residue 35–40; the sequence is SGGADS.

Belongs to the tRNA(Ile)-lysidine synthase family.

It localises to the cytoplasm. The catalysed reaction is cytidine(34) in tRNA(Ile2) + L-lysine + ATP = lysidine(34) in tRNA(Ile2) + AMP + diphosphate + H(+). Functionally, ligates lysine onto the cytidine present at position 34 of the AUA codon-specific tRNA(Ile) that contains the anticodon CAU, in an ATP-dependent manner. Cytidine is converted to lysidine, thus changing the amino acid specificity of the tRNA from methionine to isoleucine. In Geobacter sulfurreducens (strain ATCC 51573 / DSM 12127 / PCA), this protein is tRNA(Ile)-lysidine synthase.